The sequence spans 121 residues: Large ribosomal subunit protein bL19 (121 aa).

Belongs to the bacterial ribosomal protein bL19 family.

In terms of biological role, this protein is located at the 30S-50S ribosomal subunit interface and may play a role in the structure and function of the aminoacyl-tRNA binding site. This chain is Large ribosomal subunit protein bL19, found in Chlamydia trachomatis serovar L2 (strain ATCC VR-902B / DSM 19102 / 434/Bu).